A 637-amino-acid chain; its full sequence is Serine protease Hayan (637 aa).

The N-terminal stretch at 1–26 (MAMISARRYFLLGLLVLTTSAYVTVG) is a signal peptide. The Clip domain occupies 31–79 (PCQVRSDIPGICLSSSACENIRGYLKSGTLSTSQVPSCGFGAREEIICC). 3 disulfide bridges follow: Cys32/Cys78, Cys42/Cys68, and Cys48/Cys79. Disordered regions lie at residues 95–137 (FHAT…LDEN), 152–178 (KPQK…SMKM), 216–260 (QRSF…NNNN), and 286–365 (LQTT…EKER). The segment covering 125-136 (EGKRERESRLDE) has biased composition (basic and acidic residues). Residues 234 to 244 (PLTTPRSRPQR) show a composition bias toward polar residues. Residues 245–260 (PNNSNFNTNPSPNNNN) show a composition bias toward low complexity. Over residues 306 to 320 (EPYRFRGQDRDKDTQ) the composition is skewed to basic and acidic residues. Positions 321–332 (PQEPWNDVSNNL) are enriched in polar residues. Disulfide bonds link Cys371–Cys497, Cys414–Cys430, Cys543–Cys567, and Cys578–Cys609. Residues 385–632 (ILDGERVDRG…FLDYIEGIVW (248 aa)) enclose the Peptidase S1 domain. Catalysis depends on charge relay system residues His429 and Asp477. The Charge relay system role is filled by Ser582.

The protein belongs to the peptidase S1 family. CLIP subfamily.

It localises to the secreted. In terms of biological role, serine protease which, by converting prophenoloxidase 1 (PPO1) into its active form, plays an essential role in the melanization immune response to physical or septic wounding. May function in diverse PPO1-activating cascades that are negatively controlled by different serpin proteins; Spn27A and Spn28D in the hemolymph, and Spn28D and Spn77BA in the trachea. Also required in the systematic wound response by mediating the redox-dependent activation of the JNK cytoprotective cascade in neuronal tissues after integument wounding. In Drosophila melanogaster (Fruit fly), this protein is Serine protease Hayan.